A 317-amino-acid chain; its full sequence is Phosphatidylglycerol--prolipoprotein diacylglyceryl transferase 2 (317 aa).

Helical transmembrane passes span 19-39 (IPLR…VWLG), 51-71 (GVIA…GRLY), 93-113 (VWEG…GAWI), and 120-140 (IPLP…QAIG). Arg141 lines the a 1,2-diacyl-sn-glycero-3-phospho-(1'-sn-glycerol) pocket. 3 consecutive transmembrane segments (helical) span residues 180–200 (PTFL…LWAA), 211–230 (FALY…YLRI), and 241–261 (LNNW…VVSA). Residues 275–317 (GAGADGRTDDPRPADASVGLASGPPGNSTPRRATESWNVRNRS) form a disordered region. Residues 299-317 (PGNSTPRRATESWNVRNRS) are compositionally biased toward polar residues.

The protein belongs to the Lgt family.

The protein localises to the cell membrane. It carries out the reaction L-cysteinyl-[prolipoprotein] + a 1,2-diacyl-sn-glycero-3-phospho-(1'-sn-glycerol) = an S-1,2-diacyl-sn-glyceryl-L-cysteinyl-[prolipoprotein] + sn-glycerol 1-phosphate + H(+). The protein operates within protein modification; lipoprotein biosynthesis (diacylglyceryl transfer). Catalyzes the transfer of the diacylglyceryl group from phosphatidylglycerol to the sulfhydryl group of the N-terminal cysteine of a prolipoprotein, the first step in the formation of mature lipoproteins. In Streptomyces coelicolor (strain ATCC BAA-471 / A3(2) / M145), this protein is Phosphatidylglycerol--prolipoprotein diacylglyceryl transferase 2.